The sequence spans 255 residues: MRKNNRKLDELRPIRIQRDFNIHAEGSCLVEFGNTRVICTASIAESVPPFLKGKNQGWITAEYSMLPRATATRNMRESVTGKIGGRTHEIQRMIGRAMRAVIDLTKIGERTIWIDCDVIQADGGTRTASIVGAFIAMTDAIIKLNEQKLINSVPIRDTVGAVSVGIVNDRLMLDLDFEEDSNAAVDMTIVATGNGEMVEIHSLGEEATYTRKEFEAMLDLGLESLKQIAELQNVFYEKMPSINLWKRKSVKEAKL.

Phosphate contacts are provided by residues Arg-86 and 124–126; that span reads GTR.

It belongs to the RNase PH family. In terms of assembly, homohexameric ring arranged as a trimer of dimers.

It catalyses the reaction tRNA(n+1) + phosphate = tRNA(n) + a ribonucleoside 5'-diphosphate. In terms of biological role, phosphorolytic 3'-5' exoribonuclease that plays an important role in tRNA 3'-end maturation. Removes nucleotide residues following the 3'-CCA terminus of tRNAs; can also add nucleotides to the ends of RNA molecules by using nucleoside diphosphates as substrates, but this may not be physiologically important. Probably plays a role in initiation of 16S rRNA degradation (leading to ribosome degradation) during starvation. The protein is Ribonuclease PH of Hydrogenobaculum sp. (strain Y04AAS1).